The primary structure comprises 346 residues: MKFLDSAKIYIRSGDGGAGCLSFRREKFIEFGGPDGGDGGRGGDVVVECVGGLNTLIDYRYQQHFKAKTGVHGMGKNRAGGRGADAVLKVPVGTQILDEDGETMIADMTEAGQRLVLARGGNGGFGNAHFKSATNQAPRRVNPGQEGVERTVLLRLKLIADAGLVGLPNAGKSTFLATVSAARPKIADYPFTTLNPQLGVVGCDGREFVLADIPGLIEGAHEGIGLGDRFLGHVERCRVLLHLVGADTEHAGKAYKTVRRELEAYGGGLADKPEIVALSKVDSVDPDTLKQQAMRLKRAAKRAPLQLSAATNLNVQKALRAVLAEIDAAAVADAAGTAADAVVWAP.

Residues 1-159 enclose the Obg domain; that stretch reads MKFLDSAKIY…RTVLLRLKLI (159 aa). The OBG-type G domain occupies 160–327; that stretch reads ADAGLVGLPN…ALRAVLAEID (168 aa). Residues 166–173, 191–195, 212–215, 279–282, and 308–310 contribute to the GTP site; these read GLPNAGKS, FTTLN, DIPG, SKVD, and SAA. 2 residues coordinate Mg(2+): serine 173 and threonine 193.

It belongs to the TRAFAC class OBG-HflX-like GTPase superfamily. OBG GTPase family. Monomer. It depends on Mg(2+) as a cofactor.

Its subcellular location is the cytoplasm. Its function is as follows. An essential GTPase which binds GTP, GDP and possibly (p)ppGpp with moderate affinity, with high nucleotide exchange rates and a fairly low GTP hydrolysis rate. Plays a role in control of the cell cycle, stress response, ribosome biogenesis and in those bacteria that undergo differentiation, in morphogenesis control. This chain is GTPase Obg, found in Methylocella silvestris (strain DSM 15510 / CIP 108128 / LMG 27833 / NCIMB 13906 / BL2).